The chain runs to 76 residues: Acyl carrier protein (76 aa).

Positions 1–76 (MSIEERVKKI…SAIDYVQNNQ (76 aa)) constitute a Carrier domain. At serine 36 the chain carries O-(pantetheine 4'-phosphoryl)serine.

It belongs to the acyl carrier protein (ACP) family. Post-translationally, 4'-phosphopantetheine is transferred from CoA to a specific serine of apo-ACP by AcpS. This modification is essential for activity because fatty acids are bound in thioester linkage to the sulfhydryl of the prosthetic group.

It localises to the cytoplasm. It participates in lipid metabolism; fatty acid biosynthesis. In terms of biological role, carrier of the growing fatty acid chain in fatty acid biosynthesis. The sequence is that of Acyl carrier protein from Actinobacillus succinogenes (strain ATCC 55618 / DSM 22257 / CCUG 43843 / 130Z).